The following is a 500-amino-acid chain: Probable malate:quinone oxidoreductase (500 aa).

This sequence belongs to the MQO family. FAD serves as cofactor.

It carries out the reaction (S)-malate + a quinone = a quinol + oxaloacetate. It participates in carbohydrate metabolism; tricarboxylic acid cycle; oxaloacetate from (S)-malate (quinone route): step 1/1. The protein is Probable malate:quinone oxidoreductase of Halalkalibacterium halodurans (strain ATCC BAA-125 / DSM 18197 / FERM 7344 / JCM 9153 / C-125) (Bacillus halodurans).